The primary structure comprises 120 residues: Small ribosomal subunit protein uS13 (120 aa).

The tract at residues 93-120 (RKGLPVRGQTTKNNARTRKGKKKTVGSK) is disordered. Residues 107–120 (ARTRKGKKKTVGSK) show a composition bias toward basic residues.

The protein belongs to the universal ribosomal protein uS13 family. Part of the 30S ribosomal subunit. Forms a loose heterodimer with protein S19. Forms two bridges to the 50S subunit in the 70S ribosome.

Located at the top of the head of the 30S subunit, it contacts several helices of the 16S rRNA. In the 70S ribosome it contacts the 23S rRNA (bridge B1a) and protein L5 of the 50S subunit (bridge B1b), connecting the 2 subunits; these bridges are implicated in subunit movement. Contacts the tRNAs in the A and P-sites. The polypeptide is Small ribosomal subunit protein uS13 (Helicobacter pylori (strain P12)).